The primary structure comprises 384 residues: MFEPVELSNNAVIKVVGVGGGGGNAVEHMVRERIEGVEFFAINTDAQALRKVEVGQTIQIGNNITKGLGAGANPEIGRTSAEEDKELLKSALDGSDMVFIAAGMGGGTGTGAAPVVAEIAKELGILTVAVVTKPFNFEGKKRMMVADQGVLELSKHVDSLITIPNDKLLKVLSRGISLLDAFGAANNVLKGAVQGIAELITRPGLMNVDFADVRTVMVEMGYAMMGTGISSGENRAEEAAEIAISSPLLEDIDLSGARGVLVNITAGFDLKLDEFETVGNTIRSFASDNATVVIGTSLDPDMNDTLRVTVVATGIGMEKYSDVNQTKNKSSKEILMDYRYQYLNISPTAIDKKNVKNEIKETDNKKRKEPEYLDIPAFLRKRSD.

GTP contacts are provided by residues 20-24 (GGGGN), 107-109 (GTG), glutamate 138, arginine 142, and asparagine 186.

Belongs to the FtsZ family. As to quaternary structure, homodimer. Polymerizes to form a dynamic ring structure in a strictly GTP-dependent manner. Interacts directly with several other division proteins.

The protein localises to the cytoplasm. Its function is as follows. Essential cell division protein that forms a contractile ring structure (Z ring) at the future cell division site. The regulation of the ring assembly controls the timing and the location of cell division. One of the functions of the FtsZ ring is to recruit other cell division proteins to the septum to produce a new cell wall between the dividing cells. Binds GTP and shows GTPase activity. The chain is Cell division protein FtsZ from Buchnera aphidicola subsp. Schizaphis graminum (strain Sg).